We begin with the raw amino-acid sequence, 335 residues long: Aliphatic sulfonates import ATP-binding protein SsuB (335 aa).

Positions 29 to 61 (DGDAQDAAVYERDGGAHAPPFASGGAPPDGDRA) are disordered. The ABC transporter domain occupies 74 to 293 (VRLTRVSKRY…ARASAAFAAL (220 aa)). Position 106 to 113 (106 to 113 (GRSGCGKS)) interacts with ATP. A disordered region spans residues 308–335 (APAAPNAAGPEGASRGRAAPASGLRWAV).

It belongs to the ABC transporter superfamily. Aliphatic sulfonates importer (TC 3.A.1.17.2) family. In terms of assembly, the complex is composed of two ATP-binding proteins (SsuB), two transmembrane proteins (SsuC) and a solute-binding protein (SsuA).

It localises to the cell inner membrane. It catalyses the reaction ATP + H2O + aliphatic sulfonate-[sulfonate-binding protein]Side 1 = ADP + phosphate + aliphatic sulfonateSide 2 + [sulfonate-binding protein]Side 1.. Functionally, part of the ABC transporter complex SsuABC involved in aliphatic sulfonates import. Responsible for energy coupling to the transport system. The sequence is that of Aliphatic sulfonates import ATP-binding protein SsuB from Burkholderia pseudomallei (strain 1710b).